A 394-amino-acid polypeptide reads, in one-letter code: Acetate kinase (394 aa).

Asn8 lines the Mg(2+) pocket. Residue Lys15 coordinates ATP. Arg86 serves as a coordination point for substrate. Asp143 acts as the Proton donor/acceptor in catalysis. Residues 201–205 (HLGNG), 276–278 (DCR), and 324–328 (GIGEN) contribute to the ATP site. Residue Glu378 coordinates Mg(2+).

The protein belongs to the acetokinase family. In terms of assembly, homodimer. The cofactor is Mg(2+). Requires Mn(2+) as cofactor.

Its subcellular location is the cytoplasm. The catalysed reaction is acetate + ATP = acetyl phosphate + ADP. It participates in metabolic intermediate biosynthesis; acetyl-CoA biosynthesis; acetyl-CoA from acetate: step 1/2. Catalyzes the formation of acetyl phosphate from acetate and ATP. Can also catalyze the reverse reaction. The polypeptide is Acetate kinase (Dichelobacter nodosus (strain VCS1703A)).